Reading from the N-terminus, the 491-residue chain is Pre-glycoprotein polyprotein GP complex (491 aa).

G2 carries the N-myristoyl glycine; by host lipid modification. The Extracellular segment spans residues 2–17 (GQIVTFFQEVPHVIEE). A helical membrane pass occupies residues 18–33 (VMNIVLIALSVLAVLK). The Cytoplasmic portion of the chain corresponds to 34–58 (GLYNFATCGLVGLVTFLLLCGRSCT). C57 contacts Zn(2+). Residues 59-432 (TSLYKGVYEL…QGKTPLGLVD (374 aa)) are Extracellular-facing. Residues N79, N89, N99, N109, N119, and N167 are each glycosylated (N-linked (GlcNAc...) asparagine; by host). 6 disulfide bridges follow: C86-C231, C118-C155, C180-C212, C279-C292, C301-C310, and C364-C385. N-linked (GlcNAc...) asparagine; by host glycosylation is present at N224. Residues N365, N373, N390, and N395 are each glycosylated (N-linked (GlcNAc...) asparagine; by host). A helical transmembrane segment spans residues 433–453 (LFVFSTSFYLISIFLHLVKIP). Residues 454–491 (THRHIVGKSCPKPHRLNHMGICSCGLYKQPGVPVKWKR) are Cytoplasmic-facing. 6 residues coordinate Zn(2+): H455, H457, C463, H467, C475, and C477.

It belongs to the arenaviridae GPC protein family. Interacts with glycoprotein G2. Part of the GP complex (GP-C) together with glycoprotein G1 and glycoprotein G2. The GP-complex interacts with protein Z, which interacts with ribonucleocapsid; these interactions may induce virion budding. As to quaternary structure, homotrimer; disulfide-linked. In pre-fusion state, G1 homotrimers bind G2 homotrimers via ionic interactions. Part of the GP complex (GP-C) together with glycoprotein G2 and the stable signal peptide. Interacts with the primary host receptor DAG1 on the cell surface; this interaction occurs at pH 8.0 but not at pH 6.0 and below. Upon virus internalization and at endosomal pH, interacts with the host lysosomal protein LAMP1; this interaction mediates G1 dissociation from GP-C and membrane fusion. The GP-complex interacts with protein Z, which interacts with ribonucleocapsid; these interactions may induce virion budding. In terms of assembly, homotrimer. Interacts with the stable signal peptide. In pre-fusion state, G2 homotrimers bind G1 homotrimers via ionic interactions. Part of the GP complex (GP-C) together with glycoprotein G1 and the stable signal peptide. Acidification in the endosome triggers rearrangements, which ultimately leads to a 6 helix bundle formed by the two heptad repeat domains (HR1 and HR2) in post-fusion state. The GP-complex interacts with protein Z, which interacts with ribonucleocapsid; these interactions may induce virion budding. In terms of processing, specific enzymatic cleavages in vivo yield mature proteins. GP-C polyprotein is cleaved in the endoplasmic reticulum by the host protease MBTPS1. Only cleaved glycoprotein is incorporated into virions. Post-translationally, the SSP remains stably associated with the GP complex following cleavage by signal peptidase and plays crucial roles in the trafficking of GP through the secretory pathway. Myristoylation is necessary for GP2-mediated fusion activity.

It localises to the virion membrane. The protein resides in the host endoplasmic reticulum membrane. It is found in the host Golgi apparatus membrane. The protein localises to the host cell membrane. In terms of biological role, functions as a cleaved signal peptide that is retained as the third component of the GP complex (GP-C). Helps to stabilize the spike complex in its native conformation. The SSP is required for efficient glycoprotein expression, post-translational maturation cleavage of G1 and G2, glycoprotein transport to the cell surface plasma membrane, formation of infectious virus particles, and acid pH-dependent glycoprotein-mediated cell fusion. Functionally, forms the virion spikes together with glycoprotein G2. The glycoprotein spike trimers are connected to the underlying matrix. Interacts with the host receptor. Mediates virus attachment to the host primary receptor alpha-dystroglycan DAG1 (alpha-DG) at the cell surface. This attachment induces virion internalization apparently through macropinocytosis. Following endocytosis, there is a pH-dependent switch from binding DAG1 to the host lysosomal receptor LAMP1. This latter binding triggers the dissociation of GP1, exposing the fusion subunit, GP2, such that fusion can occur. Down-modulates host DAG1. Forms the virion spikes together with glycoprotein G1. The glycoprotein spike trimers are connected to the underlying matrix. Class I viral fusion protein that directs fusion of viral and host endosomal membranes, leading to delivery of the nucleocapsid into the cytoplasm. Membrane fusion is mediated by irreversible conformational changes induced by acidification. In Homo sapiens (Human), this protein is Pre-glycoprotein polyprotein GP complex.